A 343-amino-acid chain; its full sequence is ATP-dependent 6-phosphofructokinase (343 aa).

ATP-binding positions include glycine 10 and 103 to 106; that span reads GEGT. Glutamate 104 serves as a coordination point for Mg(2+). Residues 126–128, arginine 163, 170–172, glutamate 223, arginine 267, and 273–276 contribute to the substrate site; these read TID, MGR, and HVQR. Aspartate 128 (proton acceptor) is an active-site residue.

Belongs to the phosphofructokinase type A (PFKA) family. Mixed-substrate PFK group III subfamily. As to quaternary structure, homodimer or homotetramer. Mg(2+) serves as cofactor.

It is found in the cytoplasm. It carries out the reaction beta-D-fructose 6-phosphate + ATP = beta-D-fructose 1,6-bisphosphate + ADP + H(+). It functions in the pathway carbohydrate degradation; glycolysis; D-glyceraldehyde 3-phosphate and glycerone phosphate from D-glucose: step 3/4. Its function is as follows. Catalyzes the phosphorylation of D-fructose 6-phosphate to fructose 1,6-bisphosphate by ATP, the first committing step of glycolysis. In Mycobacterium leprae (strain TN), this protein is ATP-dependent 6-phosphofructokinase.